A 440-amino-acid chain; its full sequence is Protein disulfide-isomerase 5-2 (440 aa).

The first 23 residues, 1-23, serve as a signal peptide directing secretion; the sequence is MRSLKLLLCWISFLTLSISISAS. The Thioredoxin domain maps to 24-139; sequence SDDQFTLDGT…LVRYLKKFVA (116 aa). Residues cysteine 61 and cysteine 64 each act as nucleophile in the active site. A disulfide bridge connects residues cysteine 61 and cysteine 64. At threonine 160 the chain carries Phosphothreonine. Residue asparagine 171 is glycosylated (N-linked (GlcNAc...) asparagine). The helical transmembrane segment at 376–396 threads the bilayer; that stretch reads SMIGIRSVYILVFLVAVIMML. The tract at residues 406-440 is disordered; that stretch reads TGVRTATAVRERVDQATTVPEDESSEHKPSDKKED. Residues 430-440 show a composition bias toward basic and acidic residues; that stretch reads SEHKPSDKKED.

Belongs to the protein disulfide isomerase family. In terms of tissue distribution, widely expressed.

It localises to the membrane. Acts as a protein-folding catalyst that interacts with nascent polypeptides to catalyze the formation, isomerization, and reduction or oxidation of disulfide bonds. This Arabidopsis thaliana (Mouse-ear cress) protein is Protein disulfide-isomerase 5-2 (PDIL5-2).